The chain runs to 860 residues: Spindle and centriole-associated protein 1 (860 aa).

3 disordered regions span residues 160–200, 232–254, and 293–330; these read ESVI…SQSN, QSQM…QKAA, and KQLL…SSSN. Threonine 236 carries the phosphothreonine modification. Low complexity predominate over residues 236-249; the sequence is TASSGTPSSASPSG. The segment covering 308-330 has biased composition (polar residues); it reads PSKQKSSMLSASTASTDLPSSSN. Residues 383–437 adopt a coiled-coil conformation; the sequence is RYLKESELQLRKEVETRQRLEEALGDHRELIDALTAEVLFLREENTATQARLQQY. Serine 646 bears the Phosphoserine mark. Positions 729 to 755 form a coiled coil; sequence SSMEERIAELNRQSMEARGKLLQLIEQ. Phosphoserine is present on residues serine 765, serine 769, and serine 824. Residues 790-860 form a disordered region; the sequence is IPGAEAPESS…GWFALSTHVS (71 aa). Positions 808–824 are enriched in low complexity; that stretch reads SGLNSRRSSGAASNSCS.

As to quaternary structure, interacts with CEP120.

It localises to the cytoplasm. Its subcellular location is the cytoskeleton. The protein resides in the microtubule organizing center. It is found in the centrosome. The protein localises to the centriole. It localises to the spindle. Functionally, regulator required for centriole duplication. for proper bipolar spindle formation and chromosome congression in mitosis. The polypeptide is Spindle and centriole-associated protein 1 (SPICE1) (Bos taurus (Bovine)).